Here is a 976-residue protein sequence, read N- to C-terminus: Protein PLASTID MOVEMENT IMPAIRED 1-RELATED 2 (976 aa).

Residues 81–229 (IAHFGQRRFD…VLNLSFDYSV (149 aa)) form the C2 NT-type domain. A compositionally biased stretch (basic and acidic residues) spans 309–319 (KQAADSDDSGK). 2 disordered regions span residues 309–343 (KQAA…ESSR) and 381–419 (NLLP…STEK). Low complexity predominate over residues 394–414 (STFSSQVISESSESKSPSAMD).

In terms of biological role, seems not necessary for chloroplast and nuclear photorelocation movements. This is Protein PLASTID MOVEMENT IMPAIRED 1-RELATED 2 from Arabidopsis thaliana (Mouse-ear cress).